The following is a 375-amino-acid chain: Alcohol dehydrogenase 1B (375 aa).

An N-acetylserine modification is found at serine 1. Residues cysteine 46, histidine 67, cysteine 97, cysteine 100, cysteine 103, cysteine 111, and cysteine 174 each contribute to the Zn(2+) site. NAD(+) contacts are provided by residues 199–204, aspartate 223, lysine 228, 293–295, and arginine 370; these read GLGGVG and VGV.

This sequence belongs to the zinc-containing alcohol dehydrogenase family. Class-I subfamily. In terms of assembly, multimeric (with different ratios of monomers). Requires Zn(2+) as cofactor.

It is found in the cytoplasm. The catalysed reaction is a primary alcohol + NAD(+) = an aldehyde + NADH + H(+). It catalyses the reaction a secondary alcohol + NAD(+) = a ketone + NADH + H(+). This Saara hardwickii (Indian spiny-tailed lizard) protein is Alcohol dehydrogenase 1B.